Consider the following 347-residue polypeptide: Hyaluronidase conohyal-ad1 (347 aa).

A signal peptide spans 1-18; sequence MRAVVVVTGLVVVVVTTT. A propeptide spanning residues 19 to 33 is cleaved from the precursor; sequence LSLQDHDVKSASSPL. A disordered region spans residues 27–49; the sequence is KSASSPLSSSVDQGSSGDDCDEG. A compositionally biased stretch (low complexity) spans 28–43; sequence SASSPLSSSVDQGSSG. A disulfide bond links cysteine 67 and cysteine 343. The active-site Proton donor is glutamate 150.

This sequence belongs to the glycosyl hydrolase 56 family. In terms of processing, contains 4 disulfide bonds. Post-translationally, is N-linked glycosylated at three positions. As to expression, expressed by the venom duct.

Its subcellular location is the secreted. The catalysed reaction is Random hydrolysis of (1-&gt;4)-linkages between N-acetyl-beta-D-glucosamine and D-glucuronate residues in hyaluronate.. Functionally, hyaluronidase catalyzes the hydrolysis of hyaluronic acid (HA), an anionic, nonsulfated glycosaminoglycan distributed widely throughout connective, epithelial, and neural tissues. In venom, they are known to enhance diffusion of the venom by degrading the extracellular matrix. In Conus adamsonii (Rhododendron cone), this protein is Hyaluronidase conohyal-ad1.